A 351-amino-acid polypeptide reads, in one-letter code: Minor outer capsid protein P9 (351 aa).

The disordered stretch occupies residues 246–330 (GVPAALPQPD…EMDMPDGFHD (85 aa)). Basic and acidic residues predominate over residues 285-298 (MIRKKVETSKDAPS). The segment covering 315 to 324 (LEDDMSEMDM) has biased composition (acidic residues).

The protein belongs to the phytoreovirus minor outer capsid protein P9 family.

The protein localises to the virion. It localises to the host cytoplasm. Minor outer capsid protein. This Alopecurus aequalis (Barnyard grass) protein is Minor outer capsid protein P9.